The following is a 293-amino-acid chain: ATP phosphoribosyltransferase (293 aa).

The protein belongs to the ATP phosphoribosyltransferase family. Long subfamily. It depends on Mg(2+) as a cofactor.

It localises to the cytoplasm. It carries out the reaction 1-(5-phospho-beta-D-ribosyl)-ATP + diphosphate = 5-phospho-alpha-D-ribose 1-diphosphate + ATP. It functions in the pathway amino-acid biosynthesis; L-histidine biosynthesis; L-histidine from 5-phospho-alpha-D-ribose 1-diphosphate: step 1/9. With respect to regulation, feedback inhibited by histidine. Functionally, catalyzes the condensation of ATP and 5-phosphoribose 1-diphosphate to form N'-(5'-phosphoribosyl)-ATP (PR-ATP). Has a crucial role in the pathway because the rate of histidine biosynthesis seems to be controlled primarily by regulation of HisG enzymatic activity. The polypeptide is ATP phosphoribosyltransferase (Solidesulfovibrio magneticus (strain ATCC 700980 / DSM 13731 / RS-1) (Desulfovibrio magneticus)).